A 151-amino-acid polypeptide reads, in one-letter code: NPC intracellular cholesterol transporter 2 (151 aa).

Positions 1-19 (MRFLAATFLLLALSTAAQA) are cleaved as a signal peptide. 3 disulfides stabilise this stretch: Cys27/Cys140, Cys42/Cys47, and Cys93/Cys99. An N-linked (GlcNAc...) asparagine glycan is attached at Asn58. At Lys116 the chain carries N6-acetyllysine. N-linked (GlcNAc...) asparagine glycosylation is present at Asn135.

The protein belongs to the NPC2 family. Interacts with NPC1 (via the second lumenal domain) in a cholestrol-dependent manner. Interacts with NUS1/NgBR, the interaction stabilizes NCP2 and regulates cholesterol trafficking. Interacts with DHDDS. Interacts with NEDD4L (via C2 domain). Interacts with NPC1L1. As to expression, detected in gallbladder bile. Detected in fibroblasts, kidney, liver, spleen, small intestine, placenta and testis (at protein level). Epididymis.

It is found in the secreted. The protein resides in the endoplasmic reticulum. The protein localises to the lysosome. The catalysed reaction is cholesterol(in) = cholesterol(out). Its function is as follows. Intracellular cholesterol transporter which acts in concert with NPC1 and plays an important role in the egress of cholesterol from the lysosomal compartment. Unesterified cholesterol that has been released from LDLs in the lumen of the late endosomes/lysosomes is transferred by NPC2 to the cholesterol-binding pocket in the N-terminal domain of NPC1. May bind and mobilize cholesterol that is associated with membranes. NPC2 binds cholesterol with a 1:1 stoichiometry. Can bind a variety of sterols, including lathosterol, desmosterol and the plant sterols stigmasterol and beta-sitosterol. The secreted form of NCP2 regulates biliary cholesterol secretion via stimulation of ABCG5/ABCG8-mediated cholesterol transport. In Homo sapiens (Human), this protein is NPC intracellular cholesterol transporter 2.